The following is a 271-amino-acid chain: Diaminopimelate epimerase (271 aa).

Residues Asn-13, Gln-46, and Asn-66 each contribute to the substrate site. The Proton donor role is filled by Cys-75. Substrate-binding positions include 76-77 (GN), Asn-155, Asn-188, and 206-207 (ER). Catalysis depends on Cys-215, which acts as the Proton acceptor. 216–217 (GS) serves as a coordination point for substrate.

Belongs to the diaminopimelate epimerase family. As to quaternary structure, homodimer.

Its subcellular location is the cytoplasm. The enzyme catalyses (2S,6S)-2,6-diaminopimelate = meso-2,6-diaminopimelate. It functions in the pathway amino-acid biosynthesis; L-lysine biosynthesis via DAP pathway; DL-2,6-diaminopimelate from LL-2,6-diaminopimelate: step 1/1. Its function is as follows. Catalyzes the stereoinversion of LL-2,6-diaminopimelate (L,L-DAP) to meso-diaminopimelate (meso-DAP), a precursor of L-lysine and an essential component of the bacterial peptidoglycan. The sequence is that of Diaminopimelate epimerase from Vesicomyosocius okutanii subsp. Calyptogena okutanii (strain HA).